The following is a 134-amino-acid chain: S-adenosylmethionine decarboxylase proenzyme (134 aa).

Ser64 acts as the Schiff-base intermediate with substrate; via pyruvic acid in catalysis. Ser64 bears the Pyruvic acid (Ser); by autocatalysis mark. His69 (proton acceptor; for processing activity) is an active-site residue. Cys84 (proton donor; for catalytic activity) is an active-site residue.

It belongs to the prokaryotic AdoMetDC family. Type 1 subfamily. As to quaternary structure, heterotetramer of two alpha and two beta chains arranged as a dimer of alpha/beta heterodimers. Pyruvate serves as cofactor. Post-translationally, is synthesized initially as an inactive proenzyme. Formation of the active enzyme involves a self-maturation process in which the active site pyruvoyl group is generated from an internal serine residue via an autocatalytic post-translational modification. Two non-identical subunits are generated from the proenzyme in this reaction, and the pyruvate is formed at the N-terminus of the alpha chain, which is derived from the carboxyl end of the proenzyme. The post-translation cleavage follows an unusual pathway, termed non-hydrolytic serinolysis, in which the side chain hydroxyl group of the serine supplies its oxygen atom to form the C-terminus of the beta chain, while the remainder of the serine residue undergoes an oxidative deamination to produce ammonia and the pyruvoyl group blocking the N-terminus of the alpha chain.

It catalyses the reaction S-adenosyl-L-methionine + H(+) = S-adenosyl 3-(methylsulfanyl)propylamine + CO2. The protein operates within amine and polyamine biosynthesis; S-adenosylmethioninamine biosynthesis; S-adenosylmethioninamine from S-adenosyl-L-methionine: step 1/1. In terms of biological role, catalyzes the decarboxylation of S-adenosylmethionine to S-adenosylmethioninamine (dcAdoMet), the propylamine donor required for the synthesis of the polyamines spermine and spermidine from the diamine putrescine. The sequence is that of S-adenosylmethionine decarboxylase proenzyme from Hydrogenobaculum sp. (strain Y04AAS1).